The chain runs to 155 residues: Cell division protein SepF (155 aa).

Residues Arg22–Gln46 are compositionally biased toward basic and acidic residues. A disordered region spans residues Arg22 to Gln54.

This sequence belongs to the SepF family. In terms of assembly, homodimer. Interacts with FtsZ.

The protein localises to the cytoplasm. In terms of biological role, cell division protein that is part of the divisome complex and is recruited early to the Z-ring. Probably stimulates Z-ring formation, perhaps through the cross-linking of FtsZ protofilaments. Its function overlaps with FtsA. This Shouchella clausii (strain KSM-K16) (Alkalihalobacillus clausii) protein is Cell division protein SepF.